The chain runs to 469 residues: GTPase Der (469 aa).

EngA-type G domains follow at residues 3–166 (PVIA…PEDE) and 177–350 (LRLA…ESAN). GTP is bound by residues 9 to 16 (GRPNVGKS), 56 to 60 (DTGGI), 118 to 121 (NKVD), 183 to 190 (GRPNVGKS), 230 to 234 (DTAGV), and 295 to 298 (NKWD). The KH-like domain maps to 351–435 (LKVSPAKLTQ…PVKIEFKTSE (85 aa)).

This sequence belongs to the TRAFAC class TrmE-Era-EngA-EngB-Septin-like GTPase superfamily. EngA (Der) GTPase family. Associates with the 50S ribosomal subunit.

In terms of biological role, GTPase that plays an essential role in the late steps of ribosome biogenesis. In Acinetobacter baumannii (strain AB0057), this protein is GTPase Der.